A 195-amino-acid polypeptide reads, in one-letter code: MSNPITITESAQSHFAKLLAQQPEGTNIRVFVVNPGTQNAECGVSYCPPEAVEATDTEYPFSGFSAYVDELSLPFLEEAVIDFVTDKMGSQLTLKAPNAKMRKVSDDASLMERVEYALQTQVNPQLAGHGGHVRLISISDDGVALVQFGGGCNGCSMVDVTLKEGIEKELLAQFAGELTAVRDSTEHDRGEHSYY.

Residues Cys-152 and Cys-155 each coordinate [4Fe-4S] cluster.

It belongs to the NfuA family. In terms of assembly, homodimer. The cofactor is [4Fe-4S] cluster.

Involved in iron-sulfur cluster biogenesis. Binds a 4Fe-4S cluster, can transfer this cluster to apoproteins, and thereby intervenes in the maturation of Fe/S proteins. Could also act as a scaffold/chaperone for damaged Fe/S proteins. This Vibrio cholerae serotype O1 (strain ATCC 39315 / El Tor Inaba N16961) protein is Fe/S biogenesis protein NfuA.